Reading from the N-terminus, the 270-residue chain is Acyl-[acyl-carrier-protein]--UDP-N-acetylglucosamine O-acyltransferase (270 aa).

It belongs to the transferase hexapeptide repeat family. LpxA subfamily. In terms of assembly, homotrimer.

The protein localises to the cytoplasm. It carries out the reaction a (3R)-hydroxyacyl-[ACP] + UDP-N-acetyl-alpha-D-glucosamine = a UDP-3-O-[(3R)-3-hydroxyacyl]-N-acetyl-alpha-D-glucosamine + holo-[ACP]. It participates in glycolipid biosynthesis; lipid IV(A) biosynthesis; lipid IV(A) from (3R)-3-hydroxytetradecanoyl-[acyl-carrier-protein] and UDP-N-acetyl-alpha-D-glucosamine: step 1/6. In terms of biological role, involved in the biosynthesis of lipid A, a phosphorylated glycolipid that anchors the lipopolysaccharide to the outer membrane of the cell. This chain is Acyl-[acyl-carrier-protein]--UDP-N-acetylglucosamine O-acyltransferase, found in Sinorhizobium medicae (strain WSM419) (Ensifer medicae).